We begin with the raw amino-acid sequence, 424 residues long: Otefin (424 aa).

The region spanning 1 to 30 (MADVDDFDSLSNAELRAKMLAQGLPNIPVT) is the LEM domain. The interval 1-50 (MADVDDFDSLSNAELRAKMLAQGLPNIPVTDSSRKVLVKRLRASIGGQAS) is required for binding to Med and germline stem cell maintenance. The tract at residues 42-186 (RASIGGQASP…SSKRADREEN (145 aa)) is disordered. Ser-44, Ser-50, and Ser-54 each carry phosphoserine. Position 63 is a phosphothreonine (Thr-63). Positions 65-80 (APAPGAPSAPAAASTP) are enriched in low complexity. Positions 92–99 (ATKARRTI) match the Nuclear localization signal motif. The span at 103 to 133 (EAKEPVRRLPEEAIRRRPDEADRLRSEEPVA) shows a compositional bias: basic and acidic residues. Ser-152 carries the post-translational modification Phosphoserine. The span at 157 to 170 (SERKVVEPLRKPET) shows a compositional bias: basic and acidic residues. Ser-192 and Ser-198 each carry phosphoserine. Positions 259-278 (PSVPSARAQTTSSTRSYDYA) are disordered. The segment covering 262–274 (PSARAQTTSSTRS) has biased composition (low complexity). A required for binding to Med region spans residues 271–400 (STRSYDYASN…NRWLNSLEQK (130 aa)). Ser-321 carries the phosphoserine modification. Residue Thr-324 is modified to Phosphothreonine. Position 326 is a phosphoserine (Ser-326). Phosphothreonine is present on Thr-358. 2 positions are modified to phosphoserine: Ser-378 and Ser-385. The tract at residues 400 to 424 (KYHIKSKLFIVLLVLLLIGVYYIFY) is essential for nuclear membrane localization and germline stem cell maintenance. The tract at residues 406–424 (KLFIVLLVLLLIGVYYIFY) is essential for nuclear membrane localization.

In terms of assembly, interacts with Med. Interacts with Lam. Interacts with aurA, alphaTub84B, gammaTub23C and gammaTub37C. Interacts with Nemp. Phosphorylation at Thr-63 by aurA may be required for exit from mitosis. May be phosphorylated by Cdk1 and Pka-C1. In terms of tissue distribution, expressed in all cell types of the germarium and testis. Expressed in nurse cells, follicle cells and oocytes.

The protein localises to the nucleus inner membrane. Its subcellular location is the nucleus. It is found in the nucleoplasm. The protein resides in the cytoplasm. It localises to the chromosome. The protein localises to the cytoskeleton. Its subcellular location is the spindle pole. It is found in the microtubule organizing center. The protein resides in the centrosome. In terms of biological role, inner nuclear membrane protein. Involved in the attachment of membrane vesicles to chromatin during nuclear assembly, and is probably required for centrosome maturation and cell cycle progression during mitosis. Essential for differentiation of certain tissues and the maintenance of progenitor cell populations. Required for the differentiation and maintenance of male and female germline stem cells (GSCs), as well as the maintenance of somatic cells in the GSC niche. This role is likely to be independent of the BMP (Dpp) pathway that negatively regulates bam transcription during GSC differentiation. During development, plays essential and redundant functions with the other LEM domain proteins; bocks and MAN1. Also has a redundant but important role with bocks during larval development. The sequence is that of Otefin from Drosophila melanogaster (Fruit fly).